The chain runs to 2255 residues: Non-reducing polyketide synthase nvfA (2255 aa).

Positions 13–251 (ILFGPQSSDM…HHPDHTAAVE (239 aa)) are N-terminal acylcarrier protein transacylase domain (SAT). In terms of domain architecture, Ketosynthase family 3 (KS3) spans 365-781 (VRPIAVTGMA…GSNAAIVLRQ (417 aa)). Catalysis depends on for beta-ketoacyl synthase activity residues cysteine 530, histidine 665, and histidine 704. The tract at residues 887–1187 (LCFGGQNGNT…QASDLKSPQA (301 aa)) is malonyl-CoA:ACP transacylase (MAT) domain. Serine 974 functions as the For acyl/malonyl transferase activity in the catalytic mechanism. The tract at residues 1229 to 1357 (EPMGLVQVLE…GRISLHPFDS (129 aa)) is N-terminal hotdog fold. Positions 1229–1536 (EPMGLVQVLE…FTSVSIRALT (308 aa)) constitute a PKS/mFAS DH domain. The tract at residues 1232-1535 (GLVQVLEKRP…TFTSVSIRAL (304 aa)) is product template (PT) domain. Histidine 1262 functions as the Proton acceptor; for dehydratase activity in the catalytic mechanism. The C-terminal hotdog fold stretch occupies residues 1385–1536 (SSSGLKGSAV…FTSVSIRALT (152 aa)). Aspartate 1443 (proton donor; for dehydratase activity) is an active-site residue. In terms of domain architecture, Carrier spans 1581–1655 (TNKFPAIQAM…CLVQAIFPGA (75 aa)). Serine 1615 carries the post-translational modification O-(pantetheine 4'-phosphoryl)serine. The tract at residues 1809–2042 (HHASEHTLLR…GYNWVNWSCN (234 aa)) is methyltransferase (CMeT) domain. The interval 2109 to 2227 (LLIHGGGHVM…ILSFYCPTDY (119 aa)) is thioesterase (TE) domain. The For thioesterase activity role is filled by serine 2194.

The catalysed reaction is 3 malonyl-CoA + acetyl-CoA + 2 S-adenosyl-L-methionine = 3,5-dimethylorsellinate + 2 S-adenosyl-L-homocysteine + 3 CO2 + 4 CoA. The protein operates within secondary metabolite biosynthesis; terpenoid biosynthesis. Its function is as follows. Non-reducing polyketide synthase; part of the gene cluster that mediates the biosynthesis of novofumigatonin, a heavily oxygenated meroterpenoid containing a unique orthoester moiety. The first step of the pathway is the synthesis of 3,5-dimethylorsellinic acid (DMOA) by the polyketide synthase nvfA via condensation of one acetyl-CoA starter unit with 3 malonyl-CoA units and 2 methylations. DMOA is then converted to farnesyl-DMOA by the farnesyltransferase nvfB. Epoxydation by FAD-dependent monooxygenase nvfK, followed by a protonation-initiated cyclization catalyzed by the terpene cyclase nvfL leads to the production of asnavolin H. The short chain dehydrogenase nvfC then as a 3-OH dehydrogenase of asnovolin H to yield chemesin D. There are two branches to synthesize asnovolin A from chemesin D. In one branch, chemesin D undergoes Baeyer-Villiger oxidation by nvfH, methylation by nvfJ, and enoyl reduction by the nvfM D enoylreductase that reduces the double bond between C-5'and C-6', to form respectively asnovolin I, asnovolin K, and asnovolin A. In the other branch, the methylation precedes the Baeyer-Villiger oxidation and the enoyl reduction to yield asnovolin A via the asnovolin J intermediate. Asnovolin A is further converted to fumigatonoid A by the Fe(II)/2-oxoglutarate-dependent dioxygenase nvfI that catalyzes an endoperoxidation reaction. The alpha/beta hydrolase nvfD then acts as an epimerase that converts fumigatonoid A to its C-5' epimer, which then undergoes spontaneous or nvfD-catalyzed lactonization. The following step utilizes the ketoreductase nvfG to produce fumigatonoid B. The dioxygenase nvfE further converts fumigatonoid B into fumigatonoid C. Finally the Fe(II)/2-oxoglutarate-dependent dioxygenase nvfF catalyzes two rounds of oxidation to transform fumigatonoid C into the end product, novofumigatonin A. The chain is Non-reducing polyketide synthase nvfA from Aspergillus novofumigatus (strain IBT 16806).